Reading from the N-terminus, the 238-residue chain is Protein CPn_0658/CP_0089/CPj0658/CpB0684 (238 aa).

The protein belongs to the chlamydial CPn_0658/CT_538/TC_0825 family.

In Chlamydia pneumoniae (Chlamydophila pneumoniae), this protein is Protein CPn_0658/CP_0089/CPj0658/CpB0684.